The sequence spans 283 residues: Bifunctional protein FolD (283 aa).

NADP(+) is bound at residue 166 to 168 (GAS).

Belongs to the tetrahydrofolate dehydrogenase/cyclohydrolase family. Homodimer.

It carries out the reaction (6R)-5,10-methylene-5,6,7,8-tetrahydrofolate + NADP(+) = (6R)-5,10-methenyltetrahydrofolate + NADPH. It catalyses the reaction (6R)-5,10-methenyltetrahydrofolate + H2O = (6R)-10-formyltetrahydrofolate + H(+). It functions in the pathway one-carbon metabolism; tetrahydrofolate interconversion. In terms of biological role, catalyzes the oxidation of 5,10-methylenetetrahydrofolate to 5,10-methenyltetrahydrofolate and then the hydrolysis of 5,10-methenyltetrahydrofolate to 10-formyltetrahydrofolate. The sequence is that of Bifunctional protein FolD from Coxiella burnetii (strain Dugway 5J108-111).